The primary structure comprises 121 residues: Chromosome transmission fidelity protein 8 homolog (121 aa).

Belongs to the CTF8 family. In terms of assembly, component of the CTF18-RFC complex, which consists of CTF18, CTF8, DSCC1, RFC2, RFC3, RFC4 and RFC5. The CTF18-RFC complex does not interact with the Rad9/Rad1/Hus1 complex. The CTF18-RFC complex interacts with POLH. CTF18/CTF8/DSCC1 associate with PCNA. CTF8 exists as a dimer with DSCC1.

The protein localises to the nucleus. Its function is as follows. Chromosome cohesion factor involved in sister chromatid cohesion and fidelity of chromosome transmission. Component of one of the cell nuclear antigen loader complexes, CTF18-replication factor C (CTF18-RFC), which consists of CTF18, CTF8, DSCC1, RFC2, RFC3, RFC4 and RFC5. The CTF18-RFC complex binds to single-stranded and primed DNAs and has weak ATPase activity that is stimulated the presence of primed DNA, replication protein A (RPA) and proliferating cell nuclear antigen (PCNA). The CTF18-RFC complex catalyzes the ATP-dependent loading of PCNA onto primed and gapped DNA. It also interacts with and stimulates POLH, which is suggestive of a protein network that coordinates DNA repair, recombination and chromosome cohesion reactions with replication fork progression. The polypeptide is Chromosome transmission fidelity protein 8 homolog (Rattus norvegicus (Rat)).